The sequence spans 255 residues: 4-diphosphocytidyl-2-C-methyl-D-erythritol kinase (255 aa).

The active site involves K6. 95 to 105 (PVCAGLGGGSS) serves as a coordination point for ATP. D137 is an active-site residue.

Belongs to the GHMP kinase family. IspE subfamily.

The catalysed reaction is 4-CDP-2-C-methyl-D-erythritol + ATP = 4-CDP-2-C-methyl-D-erythritol 2-phosphate + ADP + H(+). The protein operates within isoprenoid biosynthesis; isopentenyl diphosphate biosynthesis via DXP pathway; isopentenyl diphosphate from 1-deoxy-D-xylulose 5-phosphate: step 3/6. In terms of biological role, catalyzes the phosphorylation of the position 2 hydroxy group of 4-diphosphocytidyl-2C-methyl-D-erythritol. This is 4-diphosphocytidyl-2-C-methyl-D-erythritol kinase from Campylobacter jejuni subsp. doylei (strain ATCC BAA-1458 / RM4099 / 269.97).